The following is an 86-amino-acid chain: Small ribosomal subunit protein bS20 (86 aa).

Residues 1–27 (MANNKSAKKRAIQAEKRRQHNASRRSM) form a disordered region.

Belongs to the bacterial ribosomal protein bS20 family.

Its function is as follows. Binds directly to 16S ribosomal RNA. This is Small ribosomal subunit protein bS20 from Vibrio cholerae serotype O1 (strain ATCC 39541 / Classical Ogawa 395 / O395).